Here is a 31-residue protein sequence, read N- to C-terminus: Cytochrome b6-f complex subunit 6 (31 aa).

A helical transmembrane segment spans residues 4 to 24; it reads ITSYFGFLLAALTITSVLFIG.

The protein belongs to the PetL family. The 4 large subunits of the cytochrome b6-f complex are cytochrome b6, subunit IV (17 kDa polypeptide, PetD), cytochrome f and the Rieske protein, while the 4 small subunits are PetG, PetL, PetM and PetN. The complex functions as a dimer.

Its subcellular location is the plastid. The protein localises to the chloroplast thylakoid membrane. Its function is as follows. Component of the cytochrome b6-f complex, which mediates electron transfer between photosystem II (PSII) and photosystem I (PSI), cyclic electron flow around PSI, and state transitions. PetL is important for photoautotrophic growth as well as for electron transfer efficiency and stability of the cytochrome b6-f complex. In Nandina domestica (Heavenly bamboo), this protein is Cytochrome b6-f complex subunit 6.